A 399-amino-acid chain; its full sequence is Fructose-bisphosphate aldolase 1, chloroplastic (399 aa).

The N-terminal 48 residues, 1–48 (MASSTATMLKASPVKSDWVKGQSLLLRQPSSVSAIRSHVAPSALTVRA), are a transit peptide targeting the chloroplast. Residue arginine 96 coordinates substrate. Serine 158 is subject to Phosphoserine. Residue lysine 186 coordinates substrate. Phosphoserine is present on serine 216. The active-site Proton acceptor is glutamate 226. Lysine 268 serves as the catalytic Schiff-base intermediate with dihydroxyacetone-P. Substrate is bound at residue 310–312 (SGG). Residue lysine 395 is modified to N6,N6,N6-trimethyllysine.

This sequence belongs to the class I fructose-bisphosphate aldolase family. Homotetramer. Can be trimethylated at Lys-395 by LSMT-L, but the trimethylation has no effect in vitro on the kinetic properties of the enzyme. In terms of processing, S-glutathionylated. As to expression, highly expressed in rosettes leaves and cauline leaves.

The protein resides in the plastid. It is found in the chloroplast. It localises to the plastoglobule. Its subcellular location is the chloroplast stroma. The catalysed reaction is beta-D-fructose 1,6-bisphosphate = D-glyceraldehyde 3-phosphate + dihydroxyacetone phosphate. The protein operates within carbohydrate degradation; glycolysis; D-glyceraldehyde 3-phosphate and glycerone phosphate from D-glucose: step 4/4. Plays a key role in glycolysis and gluconeogenesis. The protein is Fructose-bisphosphate aldolase 1, chloroplastic of Arabidopsis thaliana (Mouse-ear cress).